A 178-amino-acid chain; its full sequence is tRNA (cytidine(56)-2'-O)-methyltransferase (178 aa).

S-adenosyl-L-methionine is bound by residues L84, 112 to 116 (GAEKV), and 130 to 137 (VGNQPHSE).

This sequence belongs to the aTrm56 family. As to quaternary structure, homodimer.

Its subcellular location is the cytoplasm. It catalyses the reaction cytidine(56) in tRNA + S-adenosyl-L-methionine = 2'-O-methylcytidine(56) in tRNA + S-adenosyl-L-homocysteine + H(+). Functionally, specifically catalyzes the AdoMet-dependent 2'-O-ribose methylation of cytidine at position 56 in tRNAs. The polypeptide is tRNA (cytidine(56)-2'-O)-methyltransferase (Methanocella arvoryzae (strain DSM 22066 / NBRC 105507 / MRE50)).